A 247-amino-acid polypeptide reads, in one-letter code: 5'-nucleotidase SurE (247 aa).

Residues D8, D9, S39, and N91 each coordinate a divalent metal cation.

This sequence belongs to the SurE nucleotidase family. A divalent metal cation is required as a cofactor.

It localises to the cytoplasm. The catalysed reaction is a ribonucleoside 5'-phosphate + H2O = a ribonucleoside + phosphate. Functionally, nucleotidase that shows phosphatase activity on nucleoside 5'-monophosphates. This is 5'-nucleotidase SurE from Ruthia magnifica subsp. Calyptogena magnifica.